The chain runs to 472 residues: Ras-GEF domain-containing family member 1B (472 aa).

Residues 34–164 enclose the N-terminal Ras-GEF domain; it reads HDNNLLSGSL…MIQCLIRKLA (131 aa). In terms of domain architecture, Ras-GEF spans 204 to 452; that stretch reads DPYTLAQQLT…YLASYESEGP (249 aa).

In terms of assembly, interacts with CCDC124 during cytokinesis. Interacts with Ras family proteins.

The protein localises to the early endosome. It localises to the late endosome. The protein resides in the midbody. Guanine nucleotide exchange factor (GEF) with specificity for RAP2A, it doesn't seems to activate other Ras family proteins (in vitro). The polypeptide is Ras-GEF domain-containing family member 1B (RASGEF1B) (Bos taurus (Bovine)).